A 119-amino-acid polypeptide reads, in one-letter code: Large ribosomal subunit protein bL20 (119 aa).

Belongs to the bacterial ribosomal protein bL20 family.

Its function is as follows. Binds directly to 23S ribosomal RNA and is necessary for the in vitro assembly process of the 50S ribosomal subunit. It is not involved in the protein synthesizing functions of that subunit. The protein is Large ribosomal subunit protein bL20 of Nitrobacter winogradskyi (strain ATCC 25391 / DSM 10237 / CIP 104748 / NCIMB 11846 / Nb-255).